A 119-amino-acid polypeptide reads, in one-letter code: Large ribosomal subunit protein uL18 (119 aa).

The disordered stretch occupies residues 1–22 (MGHVEKVARRHKIKTRSKARGQ). Positions 8–19 (ARRHKIKTRSKA) are enriched in basic residues.

The protein belongs to the universal ribosomal protein uL18 family. As to quaternary structure, part of the 50S ribosomal subunit; part of the 5S rRNA/L5/L18/L25 subcomplex. Contacts the 5S and 23S rRNAs.

Functionally, this is one of the proteins that bind and probably mediate the attachment of the 5S RNA into the large ribosomal subunit, where it forms part of the central protuberance. The sequence is that of Large ribosomal subunit protein uL18 from Chlorobium phaeobacteroides (strain BS1).